The following is an 82-amino-acid chain: Putative membrane protein insertion efficiency factor (82 aa).

This sequence belongs to the UPF0161 family.

It is found in the cell inner membrane. Could be involved in insertion of integral membrane proteins into the membrane. The polypeptide is Putative membrane protein insertion efficiency factor (Thermus thermophilus (strain ATCC BAA-163 / DSM 7039 / HB27)).